The following is a 132-amino-acid chain: Small ribosomal subunit protein uS8c (132 aa).

This sequence belongs to the universal ribosomal protein uS8 family. As to quaternary structure, part of the 30S ribosomal subunit.

It localises to the plastid. Its subcellular location is the chloroplast. Functionally, one of the primary rRNA binding proteins, it binds directly to 16S rRNA central domain where it helps coordinate assembly of the platform of the 30S subunit. This is Small ribosomal subunit protein uS8c (rps8) from Chaetosphaeridium globosum (Charophycean green alga).